Reading from the N-terminus, the 471-residue chain is 3-isopropylmalate dehydratase large subunit (471 aa).

The [4Fe-4S] cluster site is built by cysteine 347, cysteine 407, and cysteine 410.

Belongs to the aconitase/IPM isomerase family. LeuC type 1 subfamily. Heterodimer of LeuC and LeuD. [4Fe-4S] cluster is required as a cofactor.

The catalysed reaction is (2R,3S)-3-isopropylmalate = (2S)-2-isopropylmalate. It participates in amino-acid biosynthesis; L-leucine biosynthesis; L-leucine from 3-methyl-2-oxobutanoate: step 2/4. In terms of biological role, catalyzes the isomerization between 2-isopropylmalate and 3-isopropylmalate, via the formation of 2-isopropylmaleate. The protein is 3-isopropylmalate dehydratase large subunit of Edwardsiella ictaluri (strain 93-146).